The primary structure comprises 122 residues: UPF0231 protein VIBHAR_03438 (122 aa).

The protein belongs to the UPF0231 family.

The polypeptide is UPF0231 protein VIBHAR_03438 (Vibrio campbellii (strain ATCC BAA-1116)).